Here is a 495-residue protein sequence, read N- to C-terminus: Cytochrome P450 monooxygenase cnsC (495 aa).

Cysteine 434 is a binding site for heme.

This sequence belongs to the cytochrome P450 family. Requires heme as cofactor.

The protein operates within alkaloid biosynthesis. In terms of biological role, cytochrome P450 monooxygenase; part of the gene cluster that mediates the biosynthesis of communesins, a prominent class of indole alkaloids with great potential as pharmaceuticals. Communesins are biosynthesized by the coupling of tryptamine and aurantioclavine, two building blocks derived from L-tryptophan. The L-tryptophan decarboxylase cnsB converts L-tryptophan to tryptamine, whereas the tryptophan dimethylallyltransferase cnsF converts L-tryptophan to 4-dimethylallyl tryptophan which is further transformed to aurantioclavine by the aurantioclavine synthase cnsA, probably aided by the catalase cnsD. The cytochrome P450 monooxygenase cnsC catalyzes the heterodimeric coupling between the two different indole moieties, tryptamine and aurantioclavine, to construct vicinal quaternary stereocenters and yield the heptacyclic communesin scaffold. The O-methyltransferase cnsE then methylates the communesin scaffold to produce communesin K, the simplest characterized communesin that contains the heptacyclic core. The dioxygenase cnsJ converts communesin K into communesin I. Acylation to introduce the hexadienyl group at position N16 of communesin I by the acyltransferase cnsK leads to the production of communesin B. The hexadienyl group is produced by the highly reducing polyketide synthase cnsI, before being hydrolytically removed from cnsI by the serine hydrolase cnsH, converted into hexadienyl-CoA by the CoA ligase cnsG, and then transferred to communesin I by cnsK. Surprisingly, cnsK may also be a promiscuous acyltransferase that can tolerate a range of acyl groups, including acetyl-, propionyl-, and butyryl-CoA, which lead to communesins A, G and H respectively. The roles of the alpha-ketoglutarate-dependent dioxygenases cnsM and cnsP have still to be determined. The polypeptide is Cytochrome P450 monooxygenase cnsC (Penicillium expansum (Blue mold rot fungus)).